We begin with the raw amino-acid sequence, 285 residues long: Anamorsin homolog 1 (285 aa).

An N-terminal SAM-like domain region spans residues 1-150; that stretch reads MEATVLLVTD…QKPTWETGSS (150 aa). The segment at 150–195 is linker; it reads SFSLKKKSVQKQESLPKPGALSVKPEMNVDLEDLIDEESLLSEEDL. Residues cysteine 206, cysteine 215, cysteine 218, and cysteine 220 each coordinate [2Fe-2S] cluster. The interval 206–220 is fe-S binding site A; it reads CEVSTKRKACKNCTC. [4Fe-4S] cluster-binding residues include cysteine 246, cysteine 249, cysteine 257, and cysteine 260. 2 consecutive short sequence motifs (cx2C motif) follow at residues 246-249 and 257-260; these read CGNC and CSSC. The segment at 246–260 is fe-S binding site B; that stretch reads CGNCGLGDAFRCSSC.

Belongs to the anamorsin family. In terms of assembly, monomer. The cofactor is [2Fe-2S] cluster. [4Fe-4S] cluster serves as cofactor.

It is found in the cytoplasm. Its subcellular location is the mitochondrion intermembrane space. Functionally, component of the cytosolic iron-sulfur (Fe-S) protein assembly (CIA) machinery. Required for the maturation of extramitochondrial Fe-S proteins. Part of an electron transfer chain functioning in an early step of cytosolic Fe-S biogenesis, facilitating the de novo assembly of a [4Fe-4S] cluster on the cytosolic Fe-S scaffold complex. Electrons are transferred from NADPH via a FAD- and FMN-containing diflavin oxidoreductase. Together with the diflavin oxidoreductase, also required for the assembly of the diferric tyrosyl radical cofactor of ribonucleotide reductase (RNR), probably by providing electrons for reduction during radical cofactor maturation in the catalytic small subunit. In Picea sitchensis (Sitka spruce), this protein is Anamorsin homolog 1.